The chain runs to 165 residues: Inorganic pyrophosphatase (165 aa).

Substrate is bound by residues K21, R35, and Y47. Positions 57, 62, and 94 each coordinate Mg(2+). Y131 contributes to the substrate binding site.

The protein belongs to the PPase family. Homotrimer. In presence of divalent cations the trimers aggregate to form a hexamer. Mg(2+) serves as cofactor.

It localises to the cytoplasm. It carries out the reaction diphosphate + H2O = 2 phosphate + H(+). Its function is as follows. Catalyzes the hydrolysis of inorganic pyrophosphate (PPi) forming two phosphate ions. This Bacillus sp. (strain PS3) protein is Inorganic pyrophosphatase.